A 114-amino-acid chain; its full sequence is Protein lin-52 homolog (114 aa).

Residues serine 26 and serine 51 each carry the phosphoserine modification.

The protein belongs to the lin-52 family. As to quaternary structure, component of the DREAM complex (also named LINC complex) at least composed of E2F4, E2F5, LIN9, LIN37, LIN52, LIN54, MYBL1, MYBL2, RBL1, RBL2, RBBP4, TFDP1 and TFDP2. The complex exists in quiescent cells where it represses cell cycle-dependent genes. It dissociates in S phase when LIN9, LIN37, LIN52 and LIN54 form a subcomplex that binds to MYBL2.

This Pongo abelii (Sumatran orangutan) protein is Protein lin-52 homolog (LIN52).